Reading from the N-terminus, the 837-residue chain is Tuftelin-interacting protein 11 (837 aa).

Basic and acidic residues-rich tracts occupy residues Met-1 to Arg-13 and Val-53 to Pro-64. Disordered stretches follow at residues Met-1–Arg-21, Val-53–Arg-72, and Leu-85–Ala-133. The required for interaction with DHX15 stretch occupies residues Met-1–Thr-50. Ser-2, Ser-59, and Ser-98 each carry phosphoserine. Residues Glu-91–Glu-102 show a composition bias toward acidic residues. A compositionally biased stretch (basic and acidic residues) spans Lys-103–Pro-116. Ser-144 carries the post-translational modification Phosphoserine. The G-patch domain maps to Thr-149–Ser-195. Residues Ile-179–Pro-236 form a disordered region. At Ser-210 the chain carries Phosphoserine. Positions Glu-217 to Gly-231 are enriched in basic and acidic residues. Residues Val-700 to Asn-705 carry the Nuclear localization signal motif. A required for nuclear speckle localization region spans residues Ile-710–Leu-734.

It belongs to the TFP11/STIP family. Identified in the spliceosome C complex. Found in the Intron Large (IL) complex, a post-mRNA release spliceosomal complex containing the excised intron, U2, U5 and U6 snRNPs, and splicing factors. Interacts with TUFT1. Interacts with DHX15; indicative for a recruitment of DHX15 to the IL complex. Interacts with GCFC2.

Its subcellular location is the cytoplasm. The protein localises to the nucleus. Its function is as follows. Involved in pre-mRNA splicing, specifically in spliceosome disassembly during late-stage splicing events. Intron turnover seems to proceed through reactions in two lariat-intron associated complexes termed Intron Large (IL) and Intron Small (IS). In cooperation with DHX15 seems to mediate the transition of the U2, U5 and U6 snRNP-containing IL complex to the snRNP-free IS complex leading to efficient debranching and turnover of excised introns. May play a role in the differentiation of ameloblasts and odontoblasts or in the forming of the enamel extracellular matrix. The chain is Tuftelin-interacting protein 11 (TFIP11) from Pan troglodytes (Chimpanzee).